The following is a 296-amino-acid chain: GTP-binding protein GEM (296 aa).

Disordered stretches follow at residues 1 to 20 (MTLN…PQQQ) and 37 to 68 (PHQY…SVIS). Low complexity predominate over residues 57–68 (SWSSDSTDSVIS). Residues 82 to 89 (GEQGVGKS) and 191 to 194 (NKSD) contribute to the GTP site. Positions 266–285 (ARRFWGKIVAKNNKNMAFKL) are calmodulin-binding.

It belongs to the small GTPase superfamily. RGK family. As to quaternary structure, interacts with calmodulin in a Ca(2+)-dependent manner. Binds ROCK1. Phosphorylated on tyrosine residues.

It is found in the cell membrane. Functionally, could be a regulatory protein, possibly participating in receptor-mediated signal transduction at the plasma membrane. Has guanine nucleotide-binding activity but undetectable intrinsic GTPase activity. This chain is GTP-binding protein GEM (GEM), found in Pongo abelii (Sumatran orangutan).